Consider the following 490-residue polypeptide: Cytochrome P450 71A21 (490 aa).

A helical transmembrane segment spans residues 1 to 21 (MESMTMIILQSLIIFITILFF). Cys432 serves as a coordination point for heme.

Belongs to the cytochrome P450 family. It depends on heme as a cofactor.

Its subcellular location is the membrane. This Arabidopsis thaliana (Mouse-ear cress) protein is Cytochrome P450 71A21 (CYP71A21).